Consider the following 105-residue polypeptide: Small ribosomal subunit protein uS10 (105 aa).

This sequence belongs to the universal ribosomal protein uS10 family. Part of the 30S ribosomal subunit.

Its function is as follows. Involved in the binding of tRNA to the ribosomes. The protein is Small ribosomal subunit protein uS10 of Rickettsia akari (strain Hartford).